Consider the following 448-residue polypeptide: N-succinylarginine dihydrolase (448 aa).

Substrate-binding positions include Gly-19–Ser-28, Asn-110, and His-137–Arg-138. Glu-174 is a catalytic residue. Arg-214 serves as a coordination point for substrate. The active site involves His-250. Substrate-binding residues include Asp-252 and Asn-365. The active-site Nucleophile is the Cys-371.

Belongs to the succinylarginine dihydrolase family. In terms of assembly, homodimer.

It catalyses the reaction N(2)-succinyl-L-arginine + 2 H2O + 2 H(+) = N(2)-succinyl-L-ornithine + 2 NH4(+) + CO2. It participates in amino-acid degradation; L-arginine degradation via AST pathway; L-glutamate and succinate from L-arginine: step 2/5. Functionally, catalyzes the hydrolysis of N(2)-succinylarginine into N(2)-succinylornithine, ammonia and CO(2). This is N-succinylarginine dihydrolase from Pseudomonas paraeruginosa (strain DSM 24068 / PA7) (Pseudomonas aeruginosa (strain PA7)).